The primary structure comprises 265 residues: MGLRIHFVVDPHGWCCMGLIVFVWLYNFFLIPKIVLFPHYEEGHIPGILIIIFYGIAMFCLVALVRASITDPGRLPENPKIPHGEREFWELCNKCNLMRPKRSHHCSRCGHCVRRMDHHCPWINNCVGEDNHWLFLQLCFYTELLTCYALMFSFCHYYYFLPLKKRNLDLFVVRHELAIMRLAAFMGITMLVGITGLFYTQLIGIITDTTSIEKMSNCCEEISRPRKPWQQTFSEVFGTRWKILWFIPFRRRQPLRVPYHFANHV.

Topologically, residues 1 to 16 (MGLRIHFVVDPHGWCC) are cytoplasmic. Residues 17–37 (MGLIVFVWLYNFFLIPKIVLF) form a helical membrane-spanning segment. Over 38 to 44 (PHYEEGH) the chain is Extracellular. A helical transmembrane segment spans residues 45 to 65 (IPGILIIIFYGIAMFCLVALV). Residues 66–133 (RASITDPGRL…NNCVGEDNHW (68 aa)) lie on the Cytoplasmic side of the membrane. The DHHC domain maps to 90 to 140 (ELCNKCNLMRPKRSHHCSRCGHCVRRMDHHCPWINNCVGEDNHWLFLQLCF). Catalysis depends on Cys-120, which acts as the S-palmitoyl cysteine intermediate. A helical transmembrane segment spans residues 134–154 (LFLQLCFYTELLTCYALMFSF). The Extracellular segment spans residues 155 to 185 (CHYYYFLPLKKRNLDLFVVRHELAIMRLAAF). The helical transmembrane segment at 186–206 (MGITMLVGITGLFYTQLIGII) threads the bilayer. The Cytoplasmic portion of the chain corresponds to 207-265 (TDTTSIEKMSNCCEEISRPRKPWQQTFSEVFGTRWKILWFIPFRRRQPLRVPYHFANHV).

It belongs to the DHHC palmitoyltransferase family.

It is found in the golgi apparatus membrane. Its subcellular location is the golgi apparatus. The protein resides in the cis-Golgi network membrane. The protein localises to the cell membrane. It catalyses the reaction L-cysteinyl-[protein] + hexadecanoyl-CoA = S-hexadecanoyl-L-cysteinyl-[protein] + CoA. Functionally, palmitoyltransferase that catalyzes the addition of palmitate onto various protein substrates. Palmitoylates sex steroid hormone receptors, including ESR1, PGR and AR, thereby regulating their targeting to the plasma membrane. This affects rapid intracellular signaling by sex hormones via ERK and AKT kinases and the generation of cAMP, but does not affect that mediated by their nuclear receptor. Palmitoylates FYN, regulates its localization in hair follicles and plays a key role in epidermal homeostasis and hair follicle differentiation. Through the palmitoylation of PLCB1 and the regulation of PLCB1 downstream signaling may indirectly regulate the function of the endothelial barrier and the adhesion of leukocytes to the endothelium. Also has a palmitoyltransferase activity toward ADRA1D, positively regulating its activity and expression and may thereby play a role in vascular contraction. May also palmitoylate eNOS and LCK. The polypeptide is Palmitoyltransferase ZDHHC21 (Bos taurus (Bovine)).